Consider the following 350-residue polypeptide: MASRAPLELLPLNRSQLSPPNATTCDDAPEAWDLLHRVLPSVIIIICVCGLLGNLLVLAVLLRPRRRLNVAEMYLANLAASDLVFVLGLPFWAANISNQFRWPFGGLLCRLVNGVIKANLFISIFLVVAISRDRYRALVHPMATRRRRQARATCVLIWVAGSLLSVPTFLFRSIEAVPELNNDSACVLLHPPGAWHVARMVELNVLGFLLPLAAIVFFNCHILASLRGRPEVRGARCGGPPDGRTTALILTFVAAFLVCWTPYHFFAFLEFLTQVQVVRGCFWENFKDLGLQYASFFAFINSCLNPVIYVFVGRLFRTRVWDLFKQCAPRRPPAVSWSHRKRVLQLFWQN.

The Extracellular segment spans residues 1–41 (MASRAPLELLPLNRSQLSPPNATTCDDAPEAWDLLHRVLPS). 2 N-linked (GlcNAc...) asparagine glycosylation sites follow: asparagine 13 and asparagine 21. Residues 42–62 (VIIIICVCGLLGNLLVLAVLL) form a helical membrane-spanning segment. Residues 63-72 (RPRRRLNVAE) lie on the Cytoplasmic side of the membrane. A helical transmembrane segment spans residues 73-93 (MYLANLAASDLVFVLGLPFWA). Topologically, residues 94–110 (ANISNQFRWPFGGLLCR) are extracellular. Asparagine 95 carries an N-linked (GlcNAc...) asparagine glycan. A disulfide bridge connects residues cysteine 109 and cysteine 186. A helical membrane pass occupies residues 111-131 (LVNGVIKANLFISIFLVVAIS). Topologically, residues 132 to 150 (RDRYRALVHPMATRRRRQA) are cytoplasmic. The chain crosses the membrane as a helical span at residues 151–171 (RATCVLIWVAGSLLSVPTFLF). Over 172-204 (RSIEAVPELNNDSACVLLHPPGAWHVARMVELN) the chain is Extracellular. Asparagine 182 carries an N-linked (GlcNAc...) asparagine glycan. The chain crosses the membrane as a helical span at residues 205-225 (VLGFLLPLAAIVFFNCHILAS). At 226-248 (LRGRPEVRGARCGGPPDGRTTAL) the chain is on the cytoplasmic side. A helical transmembrane segment spans residues 249–269 (ILTFVAAFLVCWTPYHFFAFL). Topologically, residues 270-292 (EFLTQVQVVRGCFWENFKDLGLQ) are extracellular. A helical transmembrane segment spans residues 293–313 (YASFFAFINSCLNPVIYVFVG). Residues 314–350 (RLFRTRVWDLFKQCAPRRPPAVSWSHRKRVLQLFWQN) are Cytoplasmic-facing. Cysteine 327 is lipidated: S-palmitoyl cysteine.

The protein belongs to the G-protein coupled receptor 1 family. Bradykinin receptor subfamily. BDKRB1 sub-subfamily.

Its subcellular location is the cell membrane. In terms of biological role, this is a receptor for bradykinin. Could be a factor in chronic pain and inflammation. This chain is B1 bradykinin receptor (BDKRB1), found in Canis lupus familiaris (Dog).